Consider the following 121-residue polypeptide: Ribonuclease P protein component (121 aa).

It belongs to the RnpA family. As to quaternary structure, consists of a catalytic RNA component (M1 or rnpB) and a protein subunit.

The enzyme catalyses Endonucleolytic cleavage of RNA, removing 5'-extranucleotides from tRNA precursor.. RNaseP catalyzes the removal of the 5'-leader sequence from pre-tRNA to produce the mature 5'-terminus. It can also cleave other RNA substrates such as 4.5S RNA. The protein component plays an auxiliary but essential role in vivo by binding to the 5'-leader sequence and broadening the substrate specificity of the ribozyme. This is Ribonuclease P protein component from Rickettsia prowazekii (strain Madrid E).